Reading from the N-terminus, the 821-residue chain is Protein EFR3 homolog A (821 aa).

Phosphoserine is present on residues Ser360, Ser363, Ser422, and Ser694.

Belongs to the EFR3 family. As to quaternary structure, component of a phosphatidylinositol 4-kinase (PI4K) complex, composed of PI4KA, EFR3 (EFR3A or EFR3B), TTC7 (TTC7A or TTC7B) and HYCC (HYCC1 or HYCC2). In terms of processing, palmitoylated at its N-terminus, anchoring the protein to the plasma membrane.

The protein localises to the cell membrane. It is found in the cytoplasm. Its subcellular location is the cytosol. In terms of biological role, component of a complex required to localize phosphatidylinositol 4-kinase (PI4K) to the plasma membrane. The complex acts as a regulator of phosphatidylinositol 4-phosphate (PtdIns(4)P) synthesis. In the complex, EFR3A probably acts as the membrane-anchoring component. Also involved in responsiveness to G-protein-coupled receptors; it is however unclear whether this role is direct or indirect. The chain is Protein EFR3 homolog A from Homo sapiens (Human).